The sequence spans 92 residues: Long neurotoxin 3FTx-Oxy2 (92 aa).

The first 21 residues, 1–21 (MKTLLLTLVVVTIVCLDLGYT), serve as a signal peptide directing secretion. Disulfide bonds link Cys24–Cys42, Cys35–Cys63, Cys67–Cys79, and Cys80–Cys85.

This sequence belongs to the three-finger toxin family. Long-chain subfamily. Type II alpha-neurotoxin sub-subfamily. In terms of tissue distribution, expressed by the venom gland.

The protein localises to the secreted. Binds with high affinity to muscular (alpha-1/CHRNA1) and neuronal (alpha-7/CHRNA7) nicotinic acetylcholine receptor (nAChR) and inhibits acetylcholine from binding to the receptor, thereby impairing neuromuscular and neuronal transmission. This chain is Long neurotoxin 3FTx-Oxy2, found in Oxyuranus microlepidotus (Inland taipan).